Reading from the N-terminus, the 400-residue chain is 1-deoxy-D-xylulose 5-phosphate reductoisomerase (400 aa).

The NADPH site is built by T17, G18, S19, I20, and N131. K132 contributes to the 1-deoxy-D-xylulose 5-phosphate binding site. An NADPH-binding site is contributed by E133. Position 157 (D157) interacts with Mn(2+). 1-deoxy-D-xylulose 5-phosphate is bound by residues S158, E159, S188, and H211. E159 provides a ligand contact to Mn(2+). G217 lines the NADPH pocket. 1-deoxy-D-xylulose 5-phosphate-binding residues include S224, N229, K230, and E233. E233 lines the Mn(2+) pocket.

It belongs to the DXR family. Mg(2+) serves as cofactor. The cofactor is Mn(2+).

It catalyses the reaction 2-C-methyl-D-erythritol 4-phosphate + NADP(+) = 1-deoxy-D-xylulose 5-phosphate + NADPH + H(+). It participates in isoprenoid biosynthesis; isopentenyl diphosphate biosynthesis via DXP pathway; isopentenyl diphosphate from 1-deoxy-D-xylulose 5-phosphate: step 1/6. Functionally, catalyzes the NADPH-dependent rearrangement and reduction of 1-deoxy-D-xylulose-5-phosphate (DXP) to 2-C-methyl-D-erythritol 4-phosphate (MEP). The protein is 1-deoxy-D-xylulose 5-phosphate reductoisomerase of Pseudomonas putida (strain ATCC 47054 / DSM 6125 / CFBP 8728 / NCIMB 11950 / KT2440).